Reading from the N-terminus, the 335-residue chain is Fructose-1,6-bisphosphatase class 1 (335 aa).

4 residues coordinate Mg(2+): Glu-92, Asp-114, Leu-116, and Asp-117. Substrate-binding positions include 117–120 (DGSS) and Asn-209. Glu-281 lines the Mg(2+) pocket.

The protein belongs to the FBPase class 1 family. In terms of assembly, homotetramer. Requires Mg(2+) as cofactor.

It localises to the cytoplasm. It carries out the reaction beta-D-fructose 1,6-bisphosphate + H2O = beta-D-fructose 6-phosphate + phosphate. The protein operates within carbohydrate biosynthesis; gluconeogenesis. This chain is Fructose-1,6-bisphosphatase class 1, found in Nitrosococcus oceani (strain ATCC 19707 / BCRC 17464 / JCM 30415 / NCIMB 11848 / C-107).